We begin with the raw amino-acid sequence, 716 residues long: Astellifadiene synthase (716 aa).

Residues 1–323 (MEFKYSTLID…SPRYYTDAKF (323 aa)) form a terpene cyclase region. Aspartate 92 contributes to the Mg(2+) binding site. Residues aspartate 92, 179 to 182 (RIYD), asparagine 223, 227 to 231 (SWEKE), and 316 to 317 (RY) contribute to the substrate site. The DDXXD 1 signature appears at 92-96 (DDVID). Positions 223 to 231 (NDLVSWEKE) match the NSE/DTE motif. Residues 324–713 (SQRQLDWIKN…FQLKLILQFL (390 aa)) are prenyltransferase. Isopentenyl diphosphate is bound by residues lysine 436, arginine 439, and histidine 468. The Mg(2+) site is built by aspartate 475 and aspartate 479. The short motif at 475-479 (DDVED) is the DDXXD 2 element. Residue arginine 484 participates in dimethylallyl diphosphate binding. Arginine 485 provides a ligand contact to isopentenyl diphosphate. Dimethylallyl diphosphate contacts are provided by lysine 562, threonine 563, glutamine 598, asparagine 605, lysine 615, and lysine 625.

In the N-terminal section; belongs to the terpene synthase family. The protein in the C-terminal section; belongs to the FPP/GGPP synthase family. As to quaternary structure, hexamer. Requires Mg(2+) as cofactor.

It catalyses the reaction isopentenyl diphosphate + (2E,6E)-farnesyl diphosphate = (2E,6E,10E)-geranylgeranyl diphosphate + diphosphate. The enzyme catalyses isopentenyl diphosphate + (2E,6E,10E)-geranylgeranyl diphosphate = (2E,6E,10E,14E)-geranylfarnesyl diphosphate + diphosphate. The catalysed reaction is (2E,6E,10E,14E)-geranylfarnesyl diphosphate = astellifadiene + diphosphate. It functions in the pathway secondary metabolite biosynthesis; terpenoid biosynthesis. Functionally, bifunctional terpene synthase that converts dimethylallyl diphosphate (DMAPP) and isopentenyl diphosphate (IPP) into astellifadiene. The C-terminal prenyltransferase (PT) domain of EvAS catalyzes formation of geranylfarnesyl pyrophosphate (GFPP), whereas the N-terminal terpene cyclase (TC) domain catalyzes the cyclization of GFPP to astellifadiene. In Emericella variicolor (Aspergillus stellatus), this protein is Astellifadiene synthase.